The sequence spans 341 residues: HTH-type transcriptional repressor PurR (341 aa).

The region spanning Ala-2–Val-56 is the HTH lacI-type domain. Residues Ile-4–Asn-23 constitute a DNA-binding region (H-T-H motif). The DNA-binding element occupies Ser-48 to Val-56. Hypoxanthine contacts are provided by Tyr-73, Arg-190, Thr-192, Phe-221, and Asp-275.

As to quaternary structure, homodimer.

Its pathway is purine metabolism; purine nucleotide biosynthesis [regulation]. Is the main repressor of the genes involved in the de novo synthesis of purine nucleotides, regulating purB, purC, purEK, purF, purHD, purL, purMN and guaBA expression. PurR is allosterically activated to bind its cognate DNA by binding the purine corepressors, hypoxanthine or guanine, thereby effecting transcription repression. This chain is HTH-type transcriptional repressor PurR, found in Salmonella paratyphi A (strain ATCC 9150 / SARB42).